The following is a 391-amino-acid chain: Ferrochelatase (391 aa).

Fe cation contacts are provided by H196 and E281.

It belongs to the ferrochelatase family.

It is found in the cytoplasm. It catalyses the reaction heme b + 2 H(+) = protoporphyrin IX + Fe(2+). The protein operates within porphyrin-containing compound metabolism; protoheme biosynthesis; protoheme from protoporphyrin-IX: step 1/1. Catalyzes the ferrous insertion into protoporphyrin IX. The chain is Ferrochelatase from Prochlorococcus marinus (strain MIT 9515).